We begin with the raw amino-acid sequence, 411 residues long: S-adenosylmethionine synthase (411 aa).

Position 15 (His15) interacts with ATP. Residue Asp17 coordinates Mg(2+). Position 43 (Glu43) interacts with K(+). The L-methionine site is built by Glu56 and Gln100. The tract at residues 100-110 is flexible loop; that stretch reads QSPDIAQGVNE. Residues 171–173, 248–249, Asp257, 263–264, Ala280, and Lys284 contribute to the ATP site; these read DGK, KF, and RK. An L-methionine-binding site is contributed by Asp257. Lys288 lines the L-methionine pocket.

This sequence belongs to the AdoMet synthase family. In terms of assembly, homotetramer; dimer of dimers. It depends on Mg(2+) as a cofactor. Requires K(+) as cofactor.

It is found in the cytoplasm. The enzyme catalyses L-methionine + ATP + H2O = S-adenosyl-L-methionine + phosphate + diphosphate. The protein operates within amino-acid biosynthesis; S-adenosyl-L-methionine biosynthesis; S-adenosyl-L-methionine from L-methionine: step 1/1. Catalyzes the formation of S-adenosylmethionine (AdoMet) from methionine and ATP. The overall synthetic reaction is composed of two sequential steps, AdoMet formation and the subsequent tripolyphosphate hydrolysis which occurs prior to release of AdoMet from the enzyme. This chain is S-adenosylmethionine synthase, found in Synechococcus sp. (strain CC9605).